Consider the following 440-residue polypeptide: Cobyrinate a,c-diamide synthase (440 aa).

Residues 247 to 428 (RIAIAYDAAF…MHLYFPSNPR (182 aa)) form the GATase cobBQ-type domain. Residue C329 is the Nucleophile of the active site.

The protein belongs to the CobB/CbiA family. Requires Mg(2+) as cofactor.

It carries out the reaction cob(II)yrinate + 2 L-glutamine + 2 ATP + 2 H2O = cob(II)yrinate a,c diamide + 2 L-glutamate + 2 ADP + 2 phosphate + 2 H(+). The protein operates within cofactor biosynthesis; adenosylcobalamin biosynthesis; cob(II)yrinate a,c-diamide from sirohydrochlorin (anaerobic route): step 10/10. Functionally, catalyzes the ATP-dependent amidation of the two carboxylate groups at positions a and c of cobyrinate, using either L-glutamine or ammonia as the nitrogen source. This chain is Cobyrinate a,c-diamide synthase, found in Picrophilus torridus (strain ATCC 700027 / DSM 9790 / JCM 10055 / NBRC 100828 / KAW 2/3).